Consider the following 199-residue polypeptide: Recombination protein RecR (199 aa).

A C4-type zinc finger spans residues 56–71 (CSICFNVSQDDQCRIC). Residues 79 to 174 (SVLCVVEEYK…RVTRLASGLP (96 aa)) form the Toprim domain.

This sequence belongs to the RecR family.

May play a role in DNA repair. It seems to be involved in an RecBC-independent recombinational process of DNA repair. It may act with RecF and RecO. This is Recombination protein RecR from Nocardioides sp. (strain ATCC BAA-499 / JS614).